The primary structure comprises 359 residues: Peptide chain release factor 1 (359 aa).

Gln232 bears the N5-methylglutamine mark.

The protein belongs to the prokaryotic/mitochondrial release factor family. Methylated by PrmC. Methylation increases the termination efficiency of RF1.

It is found in the cytoplasm. In terms of biological role, peptide chain release factor 1 directs the termination of translation in response to the peptide chain termination codons UAG and UAA. The polypeptide is Peptide chain release factor 1 (Lawsonia intracellularis (strain PHE/MN1-00)).